Reading from the N-terminus, the 279-residue chain is NAD-dependent protein deacylase (279 aa).

Residues 20–272 enclose the Deacetylase sirtuin-type domain; sequence RERLRQRIFF…PEFVEKLLKG (253 aa). NAD(+) is bound at residue 48 to 67; sequence GAGISAESGIRTFRAADGLW. Tyrosine 92 and arginine 95 together coordinate substrate. 129–132 contributes to the NAD(+) binding site; it reads QNID. The Proton acceptor role is filled by histidine 147. Zn(2+)-binding residues include cysteine 155 and cysteine 174. Residues 214 to 216, 240 to 242, and alanine 258 contribute to the NAD(+) site; these read GTS and NLE.

The protein belongs to the sirtuin family. Class III subfamily. Forms a 1:1 complex with acetyl-CoA synthetase (Acs). It depends on Zn(2+) as a cofactor.

Its subcellular location is the cytoplasm. It carries out the reaction N(6)-acetyl-L-lysyl-[protein] + NAD(+) + H2O = 2''-O-acetyl-ADP-D-ribose + nicotinamide + L-lysyl-[protein]. It catalyses the reaction N(6)-succinyl-L-lysyl-[protein] + NAD(+) + H2O = 2''-O-succinyl-ADP-D-ribose + nicotinamide + L-lysyl-[protein]. The enzyme catalyses N(6)-(2-hydroxyisobutanoyl)-L-lysyl-[protein] + NAD(+) + H2O = 2''-O-(2-hydroxyisobutanoyl)-ADP-D-ribose + nicotinamide + L-lysyl-[protein]. With respect to regulation, deacetylation is inhibited by nicotinamide. NAD-dependent lysine deacetylase that specifically removes acetyl groups on target proteins. Also acts as a protein-lysine deacylase by mediating protein desuccinylation and de-2-hydroxyisobutyrylation. Modulates the activities of several proteins which are inactive in their acylated form. Activates the enzyme acetyl-CoA synthetase (acs) by deacetylating 'Lys-609' in the inactive, acetylated form of the enzyme. May also modulate the activity of other propionyl-adenosine monophosphate (AMP)-forming enzymes. This chain is NAD-dependent protein deacylase, found in Escherichia coli (strain K12).